The primary structure comprises 391 residues: 3-ketoacyl-CoA thiolase (391 aa).

Catalysis depends on Cys95, which acts as the Acyl-thioester intermediate. Residues His347 and Cys377 each act as proton acceptor in the active site.

It belongs to the thiolase-like superfamily. Thiolase family. As to quaternary structure, heterotetramer of two alpha chains (FadB) and two beta chains (FadA).

It localises to the cytoplasm. It carries out the reaction an acyl-CoA + acetyl-CoA = a 3-oxoacyl-CoA + CoA. It functions in the pathway lipid metabolism; fatty acid beta-oxidation. Its function is as follows. Catalyzes the final step of fatty acid oxidation in which acetyl-CoA is released and the CoA ester of a fatty acid two carbons shorter is formed. The polypeptide is 3-ketoacyl-CoA thiolase (Pseudomonas syringae pv. tomato (strain ATCC BAA-871 / DC3000)).